The sequence spans 259 residues: AM-toxin biosynthesis protein 11 (259 aa).

A disordered region spans residues 39–66; it reads RRSRRRPEEESIQSLSKHVSTTTQPCPT. Residues 50–64 show a composition bias toward polar residues; the sequence is IQSLSKHVSTTTQPC.

It functions in the pathway mycotoxin biosynthesis. Part of the gene clusters that mediate the biosynthesis of AM-toxins, host-selective toxins (HSTs) causing Alternaria blotch on apple, a worldwide distributed disease. AM-toxins are cyclic depsipeptides containing the 3 residues 2-hydroxy-isovaleric acid (2-HIV), dehydroalanine, L-alanine which are common for all 3 AM-toxins I to III. The fourth precursor is L-alpha-amino-methoxyphenyl-valeric acid (L-Amv) for AM-toxin I, L-alpha-amino-phenyl-valeric acid (L-Apv) for AM-toxin II, and L-alpha-amino-hydroxyphenyl-valeric acid (L-Ahv) for AM-toxin III. AM-toxins have two target sites for affecting susceptible apple cells; they cause invagination of the plasma membrane and electrolyte loss and chloroplast disorganization. The non-ribosomal peptide synthetase AMT1 contains 4 catalytic modules and is responsible for activation of each residue in AM-toxin. The aldo-keto reductase AMT2 catalyzes the conversion of 2-keto-isovaleric acid (2-KIV) to 2-hydroxy-isovaleric acid (2-HIV), one of the precursor residues incorporated by AMT1 during AM-toxin biosynthesis, by reduction of its ketone to an alcohol. The cytochrome P450 monooxygenase AMT3 and the thioesterase AMT4 are also important for AM-toxin production, but their exact function within the AM-toxin biosynthesis are not known yet. Up to 21 proteins (including AMT1 to AMT4) are predicted to be involved in AM-toxin biosynthesis since their expression ishighly up-regulated in AM-toxin-producing cultures. The chain is AM-toxin biosynthesis protein 11 from Alternaria alternata (Alternaria rot fungus).